A 258-amino-acid chain; its full sequence is RBPJ-interacting and tubulin-associated protein 1 (258 aa).

Disordered stretches follow at residues 28 to 86, 132 to 182, and 195 to 258; these read FGSP…PRKK, TPPA…APRS, and AVPS…PPWK. Positions 71–81 are enriched in polar residues; sequence SPSSRGSTPNL. The short motif at 81 to 97 is the Nuclear localization signal element; the sequence is LTPRKKNKYRLIGHTPS. Residues 117-145 form an interaction with RBPJ/RBPSUH region; sequence RTAVEDAAKLRTLFWTPPATPRGSHSPRP. Positions 145 to 258 are interaction with tubulin; that stretch reads PRETPLRAIH…CPQKPKPPWK (114 aa). 2 stretches are compositionally biased toward polar residues: residues 201–212 and 236–245; these read HPASTAPQTNGP and GSVSGPTTPQ.

This sequence belongs to the RITA family. As to quaternary structure, interacts with RBPJ/RBPSUH.

Its subcellular location is the cytoplasm. The protein resides in the nucleus. The protein localises to the cytoskeleton. It localises to the microtubule organizing center. It is found in the centrosome. In terms of biological role, tubulin-binding protein that acts as a negative regulator of Notch signaling pathway. Shuttles between the cytoplasm and the nucleus and mediates the nuclear export of RBPJ/RBPSUH, thereby preventing the interaction between RBPJ/RBPSUH and NICD product of Notch proteins (Notch intracellular domain), leading to down-regulate Notch-mediated transcription. May play a role in neurogenesis. The polypeptide is RBPJ-interacting and tubulin-associated protein 1 (Rita1) (Rattus norvegicus (Rat)).